The sequence spans 148 residues: D-aminoacyl-tRNA deacylase (148 aa).

The Gly-cisPro motif, important for rejection of L-amino acids motif lies at 137 to 138 (GP).

The protein belongs to the DTD family. In terms of assembly, homodimer.

Its subcellular location is the cytoplasm. It catalyses the reaction glycyl-tRNA(Ala) + H2O = tRNA(Ala) + glycine + H(+). It carries out the reaction a D-aminoacyl-tRNA + H2O = a tRNA + a D-alpha-amino acid + H(+). Functionally, an aminoacyl-tRNA editing enzyme that deacylates mischarged D-aminoacyl-tRNAs. Also deacylates mischarged glycyl-tRNA(Ala), protecting cells against glycine mischarging by AlaRS. Acts via tRNA-based rather than protein-based catalysis; rejects L-amino acids rather than detecting D-amino acids in the active site. By recycling D-aminoacyl-tRNA to D-amino acids and free tRNA molecules, this enzyme counteracts the toxicity associated with the formation of D-aminoacyl-tRNA entities in vivo and helps enforce protein L-homochirality. This Ligilactobacillus salivarius (strain UCC118) (Lactobacillus salivarius) protein is D-aminoacyl-tRNA deacylase.